The chain runs to 144 residues: Large ribosomal subunit protein uL11 (144 aa).

The protein belongs to the universal ribosomal protein uL11 family. As to quaternary structure, part of the ribosomal stalk of the 50S ribosomal subunit. Interacts with L10 and the large rRNA to form the base of the stalk. L10 forms an elongated spine to which L12 dimers bind in a sequential fashion forming a multimeric L10(L12)X complex. In terms of processing, one or more lysine residues are methylated.

Functionally, forms part of the ribosomal stalk which helps the ribosome interact with GTP-bound translation factors. The protein is Large ribosomal subunit protein uL11 of Parafrankia sp. (strain EAN1pec).